We begin with the raw amino-acid sequence, 406 residues long: Bifunctional enzyme IspD/IspF (406 aa).

A 2-C-methyl-D-erythritol 4-phosphate cytidylyltransferase region spans residues 1 to 247; it reads MSLIRVNGEA…AFFFNPAKDT (247 aa). Positions 248–406 are 2-C-methyl-D-erythritol 2,4-cyclodiphosphate synthase; that stretch reads FIGMGFDTHA…HVSMRYKQKL (159 aa). D254 and H256 together coordinate a divalent metal cation. 4-CDP-2-C-methyl-D-erythritol 2-phosphate-binding positions include 254 to 256 and 280 to 281; these read DTH and HS. H288 is an a divalent metal cation binding site. 4-CDP-2-C-methyl-D-erythritol 2-phosphate contacts are provided by residues 302 to 304, 307 to 311, 378 to 381, F385, and K388; these read DIG, FPDND, and TTME.

It in the N-terminal section; belongs to the IspD/TarI cytidylyltransferase family. IspD subfamily. This sequence in the C-terminal section; belongs to the IspF family. Requires a divalent metal cation as cofactor.

It carries out the reaction 2-C-methyl-D-erythritol 4-phosphate + CTP + H(+) = 4-CDP-2-C-methyl-D-erythritol + diphosphate. The enzyme catalyses 4-CDP-2-C-methyl-D-erythritol 2-phosphate = 2-C-methyl-D-erythritol 2,4-cyclic diphosphate + CMP. Its pathway is isoprenoid biosynthesis; isopentenyl diphosphate biosynthesis via DXP pathway; isopentenyl diphosphate from 1-deoxy-D-xylulose 5-phosphate: step 2/6. It functions in the pathway isoprenoid biosynthesis; isopentenyl diphosphate biosynthesis via DXP pathway; isopentenyl diphosphate from 1-deoxy-D-xylulose 5-phosphate: step 4/6. Functionally, bifunctional enzyme that catalyzes the formation of 4-diphosphocytidyl-2-C-methyl-D-erythritol from CTP and 2-C-methyl-D-erythritol 4-phosphate (MEP) (IspD), and catalyzes the conversion of 4-diphosphocytidyl-2-C-methyl-D-erythritol 2-phosphate (CDP-ME2P) to 2-C-methyl-D-erythritol 2,4-cyclodiphosphate (ME-CPP) with a corresponding release of cytidine 5-monophosphate (CMP) (IspF). The chain is Bifunctional enzyme IspD/IspF from Helicobacter pylori (strain G27).